The primary structure comprises 592 residues: Inactive metallocarboxypeptidase ECM14 (592 aa).

The N-terminal stretch at 1–21 is a signal peptide; it reads MRQFTHGTLLAILALANTISA. Positions 22–174 are excised as a propeptide; it reads IPSFSANNYP…QTVYESYPSS (153 aa). Residues 170-179 show a composition bias toward polar residues; that stretch reads SYPSSSQRPT. A disordered region spans residues 170–191; the sequence is SYPSSSQRPTDNGRGFLPSRES. The Peptidase M14 domain occupies 202-521; that stretch reads DYQPLSVIGP…NAVMVLAKFL (320 aa). Zn(2+) is bound by residues His264 and Glu267. Substrate is bound by residues 264–267, Arg322, and 339–340; these read HARE and DR. Residues Cys333 and Cys356 are joined by a disulfide bond. N-linked (GlcNAc...) asparagine glycosylation occurs at Asn349. Zn(2+) is bound at residue His396. 397–398 is a substrate binding site; it reads SY. The interval 542–592 is disordered; it reads ADKPILDDGDDDEEEDGQDKKDDSWIPDEYKNDNDHDDDDDGWGLRRRRKR. Residues 548–558 show a composition bias toward acidic residues; it reads DDGDDDEEEDG. The span at 559 to 575 shows a compositional bias: basic and acidic residues; that stretch reads QDKKDDSWIPDEYKNDN.

The protein belongs to the peptidase M14 family. The cofactor is Zn(2+).

The protein localises to the vacuole. It is found in the secreted. In terms of biological role, inactive carboxypeptidase that may play a role in cell wall organization and biogenesis. The sequence is that of Inactive metallocarboxypeptidase ECM14 (ECM14) from Ajellomyces dermatitidis (strain ER-3 / ATCC MYA-2586) (Blastomyces dermatitidis).